The sequence spans 500 residues: NAD(P)H-quinone oxidoreductase chain 4, chloroplastic (500 aa).

14 helical membrane passes run 3–23, 37–57, 84–104, 111–129, 134–154, 167–187, 208–228, 242–262, 272–292, 305–325, 330–350, 386–406, 416–436, and 462–482; these read FFPWLTIIVVLPIFAGSVIFF, ICICILELLLTTYAFCYHFQF, GLSIGPILLTGFITTLATLAA, SRLFHFLMLAMYSGQIGSF, LLLFFIMWEFELIPVYLLLSI, FILYTAGGSIFLLMGVLGVGL, ALEIIFYIGFFIAFAVKSPII, HYSTCMLLAGILLKMGAYGLI, AHSIFSPWLVIVGTIQIIYAA, IAYSSVSHMGFILIGIGSITD, GAILQIISHGFIGAALFFLAG, LALPGMSGFVAELIVFFGIIT, ILITFVMAIGMILTPIYSLSM, and LFVSISIFLPVIGIGMYPDFV.

It belongs to the complex I subunit 4 family.

It is found in the plastid. Its subcellular location is the chloroplast thylakoid membrane. The enzyme catalyses a plastoquinone + NADH + (n+1) H(+)(in) = a plastoquinol + NAD(+) + n H(+)(out). The catalysed reaction is a plastoquinone + NADPH + (n+1) H(+)(in) = a plastoquinol + NADP(+) + n H(+)(out). The protein is NAD(P)H-quinone oxidoreductase chain 4, chloroplastic of Panax ginseng (Korean ginseng).